A 1170-amino-acid polypeptide reads, in one-letter code: Cellulose synthase-like protein D2 (1170 aa).

2 disordered regions span residues 1 to 75 (MASN…PESG) and 269 to 295 (NEVD…EFTS). The span at 10–24 (RHSNSSRLSRMSYSG) shows a compositional bias: low complexity. Over residues 273–288 (NGGGGGGGGGLGGGDG) the composition is skewed to gly residues. Helical transmembrane passes span 311–331 (VLSP…LFLA) and 341–361 (AMWL…SWLL). Residue D441 is part of the active site. Positions 527–551 (HAREEIKAMKRQREAALDDVVEAVK) form a coiled coil. Residue D873 is part of the active site. 6 helical membrane-spanning segments follow: residues 955–975 (IFLI…QFIV), 981–1001 (TFLT…VLEI), 1027–1047 (LAAV…SFTL), 1070–1090 (SLMI…AVGF), 1104–1124 (LLGG…FAKG), and 1134–1154 (TIVF…WVAI).

The protein belongs to the glycosyltransferase 2 family. Plant cellulose synthase-like D subfamily.

Its subcellular location is the golgi apparatus membrane. In terms of biological role, thought to be a Golgi-localized beta-glycan synthase that polymerize the backbones of noncellulosic polysaccharides (hemicelluloses) of plant cell wall. The chain is Cellulose synthase-like protein D2 (CSLD2) from Oryza sativa subsp. indica (Rice).